Here is a 197-residue protein sequence, read N- to C-terminus: Rac-like GTP-binding protein 6 (197 aa).

GTP is bound at residue 13 to 20 (GDGAVGKT). The short motif at 35–43 (YVPTVFDNF) is the Effector region element. Residues 60-64 (DTAGQ) and 118-121 (TKLD) each bind GTP. Residue Cys194 is modified to Cysteine methyl ester. Residue Cys194 is the site of S-geranylgeranyl cysteine attachment. The propeptide at 195–197 (SIL) is removed in mature form.

This sequence belongs to the small GTPase superfamily. Rho family.

The protein resides in the cytoplasm. Its subcellular location is the membrane. Functionally, inactive GDP-bound Rho GTPases reside in the cytosol, are found in a complex with Rho GDP-dissociation inhibitors (Rho GDIs), and are released from the GDI protein in order to translocate to membranes upon activation. The polypeptide is Rac-like GTP-binding protein 6 (RAC6) (Oryza sativa subsp. japonica (Rice)).